Here is a 288-residue protein sequence, read N- to C-terminus: N-acetylneuraminate lyase (288 aa).

Aceneuramate contacts are provided by Ser44 and Thr45. Catalysis depends on Tyr133, which acts as the Proton donor. The Schiff-base intermediate with substrate role is filled by Lys161. Thr163, Gly185, Asp187, Glu188, and Ser204 together coordinate aceneuramate.

This sequence belongs to the DapA family. NanA subfamily. In terms of assembly, homotetramer.

The protein resides in the cytoplasm. The catalysed reaction is aceneuramate = aldehydo-N-acetyl-D-mannosamine + pyruvate. It functions in the pathway amino-sugar metabolism; N-acetylneuraminate degradation; D-fructose 6-phosphate from N-acetylneuraminate: step 1/5. Its function is as follows. Catalyzes the reversible aldol cleavage of N-acetylneuraminic acid (sialic acid; Neu5Ac) to form pyruvate and N-acetylmannosamine (ManNAc) via a Schiff base intermediate. The polypeptide is N-acetylneuraminate lyase (Clostridium perfringens (strain ATCC 13124 / DSM 756 / JCM 1290 / NCIMB 6125 / NCTC 8237 / Type A)).